A 129-amino-acid polypeptide reads, in one-letter code: Small ribosomal subunit protein uS8 (129 aa).

This sequence belongs to the universal ribosomal protein uS8 family. As to quaternary structure, part of the 30S ribosomal subunit. Contacts proteins S5 and S12.

In terms of biological role, one of the primary rRNA binding proteins, it binds directly to 16S rRNA central domain where it helps coordinate assembly of the platform of the 30S subunit. This chain is Small ribosomal subunit protein uS8, found in Mycoplasma mycoides subsp. mycoides SC (strain CCUG 32753 / NCTC 10114 / PG1).